A 297-amino-acid chain; its full sequence is Phosphatidylglycerol--prolipoprotein diacylglyceryl transferase (297 aa).

Transmembrane regions (helical) follow at residues 20-40, 58-78, 104-124, and 133-153; these read FLTIRWYGLLISISVVIGLFI, ILPSLIISSIIGARAYYVIFE, IAIWQGGIAIHGGLIGGFLCI, and IHLKTFIDILIPSIILGQSIG. Arg154 contributes to the a 1,2-diacyl-sn-glycero-3-phospho-(1'-sn-glycerol) binding site. 3 helical membrane-spanning segments follow: residues 194–214, 225–245, and 266–286; these read TFIYESLWNFLIFILLITIFY, GFISCLYLIGYSFGRFWIEGL, and AQFISIFLFSSGLIGLFFLRL.

Belongs to the Lgt family.

The protein localises to the cell inner membrane. The catalysed reaction is L-cysteinyl-[prolipoprotein] + a 1,2-diacyl-sn-glycero-3-phospho-(1'-sn-glycerol) = an S-1,2-diacyl-sn-glyceryl-L-cysteinyl-[prolipoprotein] + sn-glycerol 1-phosphate + H(+). It participates in protein modification; lipoprotein biosynthesis (diacylglyceryl transfer). Functionally, catalyzes the transfer of the diacylglyceryl group from phosphatidylglycerol to the sulfhydryl group of the N-terminal cysteine of a prolipoprotein, the first step in the formation of mature lipoproteins. The chain is Phosphatidylglycerol--prolipoprotein diacylglyceryl transferase from Prochlorococcus marinus subsp. pastoris (strain CCMP1986 / NIES-2087 / MED4).